A 521-amino-acid chain; its full sequence is Small ribosomal subunit protein mL104 (rPPR9) (521 aa).

The transit peptide at 1 to 59 (MPPSLPSLQLRRLLLRSFISSSSVNTLQSQPRIISSKPLFSPLPPSRSSIFSTFPSRFF) directs the protein to the mitochondrion. PPR repeat units follow at residues 174-204 (GGKT…MEND), 210-240 (DKES…TANE), 244-278 (DENI…GFEI), 279-313 (GTKA…LLEM), 321-355 (NTET…GCQP), 356-390 (DAET…GYGE), 393-427 (NKKE…GCKP), and 428-462 (GIKT…GIAV). Residues 480–495 (EVDSNVKKRETLPEKT) are compositionally biased toward basic and acidic residues. The disordered stretch occupies residues 480–499 (EVDSNVKKRETLPEKTARKK). A Nuclear localization signal motif is present at residues 486 to 503 (KKRETLPEKTARKKKRLK).

The protein belongs to the PPR family. P subfamily. Interacts with NAP1;1 and TCP8. Able to bind mitochondrial RNA in vitro. Component of the mitochondrial ribosome small subunit. Expressed in root tips, lateral root primordia and leaf primordia. Highly detected in the mature pollen grains.

It is found in the mitochondrion matrix. The protein localises to the nucleus. Its function is as follows. RNA-binding protein that functions in both mitochondrion and nucleus. In mitochondrion, it is associated with polysomes and may play a role in translation. Required during embryogenesis. In nucleus, might be involved in the regulation of its own gene expression. The polypeptide is Small ribosomal subunit protein mL104 (rPPR9) (PNM1) (Arabidopsis thaliana (Mouse-ear cress)).